The primary structure comprises 361 residues: Chorismate synthase (361 aa).

2 residues coordinate NADP(+): arginine 48 and arginine 54. Residues 125-127 (RSS), 238-239 (NA), glycine 278, 293-297 (KPTSS), and arginine 319 contribute to the FMN site.

Belongs to the chorismate synthase family. As to quaternary structure, homotetramer. FMNH2 is required as a cofactor.

The enzyme catalyses 5-O-(1-carboxyvinyl)-3-phosphoshikimate = chorismate + phosphate. It participates in metabolic intermediate biosynthesis; chorismate biosynthesis; chorismate from D-erythrose 4-phosphate and phosphoenolpyruvate: step 7/7. Its function is as follows. Catalyzes the anti-1,4-elimination of the C-3 phosphate and the C-6 proR hydrogen from 5-enolpyruvylshikimate-3-phosphate (EPSP) to yield chorismate, which is the branch point compound that serves as the starting substrate for the three terminal pathways of aromatic amino acid biosynthesis. This reaction introduces a second double bond into the aromatic ring system. The polypeptide is Chorismate synthase (Enterobacter sp. (strain 638)).